The following is a 252-amino-acid chain: Glycerol-3-phosphate regulon repressor (252 aa).

Positions 3–58 constitute an HTH deoR-type domain; it reads QTQRHNGIIELVKQQGYVSTEELVEHFSVSPQTIRRDLNELAEQNLILRHHGGAAL. The segment at residues 20 to 39 is a DNA-binding region (H-T-H motif); that stretch reads VSTEELVEHFSVSPQTIRRD.

Its function is as follows. Repressor of the glycerol-3-phosphate regulon. The protein is Glycerol-3-phosphate regulon repressor (glpR) of Escherichia coli (strain K12).